Reading from the N-terminus, the 187-residue chain is Adenine phosphoribosyltransferase (187 aa).

133 to 137 (ATGGS) lines the AMP pocket.

Belongs to the purine/pyrimidine phosphoribosyltransferase family. As to quaternary structure, homodimer. The cofactor is Mg(2+).

The protein localises to the cytoplasm. Its subcellular location is the nucleus. The enzyme catalyses AMP + diphosphate = 5-phospho-alpha-D-ribose 1-diphosphate + adenine. It functions in the pathway purine metabolism; AMP biosynthesis via salvage pathway; AMP from adenine: step 1/1. In terms of biological role, catalyzes a salvage reaction resulting in the formation of AMP, that is energically less costly than de novo synthesis. In Kluyveromyces lactis (strain ATCC 8585 / CBS 2359 / DSM 70799 / NBRC 1267 / NRRL Y-1140 / WM37) (Yeast), this protein is Adenine phosphoribosyltransferase (APT1).